The sequence spans 425 residues: MSAIADITAREILDSRGNPTVEVDVILDSGAMGRAAVPSGASTGAHEAVELRDGEPARFGGKGVQRAVEAVEGEIFDAIGGMDASEQVAIDETMIDLDGTPNKARLGANAILGVSLAVAKAAADEIGLPLYRYLGGVYARTLPVPMMNIINGGKHADNPIDIQEFMIQPVGAASIAEAVRMGSEVFQALKKILHDAGHNTNVGDEGGFAPGLKSAEEALGFMTRAVEAAGYRAGEDIAFALDCAATEFYKDGRYHLEGEGKVLDAGGMTDYIAALAKSFPIISVEDPLSEDDWEGWAHFTSTLGGAMQVVGDDLFVTNPTRLRRGIAAKSANSILIKVNQIGTLSETLEAVELAQRAGMTAVISHRSGETEDATIADIAVATNAGQIKTGSLARSDRVAKYNQLIRIEAELDIAGRFAGRTILRG.

Position 163 (Gln163) interacts with (2R)-2-phosphoglycerate. Catalysis depends on Glu205, which acts as the Proton donor. Positions 242, 285, and 312 each coordinate Mg(2+). (2R)-2-phosphoglycerate-binding residues include Lys337, Arg366, Ser367, and Lys388. Lys337 serves as the catalytic Proton acceptor.

It belongs to the enolase family. The cofactor is Mg(2+).

Its subcellular location is the cytoplasm. The protein localises to the secreted. The protein resides in the cell surface. The catalysed reaction is (2R)-2-phosphoglycerate = phosphoenolpyruvate + H2O. Its pathway is carbohydrate degradation; glycolysis; pyruvate from D-glyceraldehyde 3-phosphate: step 4/5. Functionally, catalyzes the reversible conversion of 2-phosphoglycerate (2-PG) into phosphoenolpyruvate (PEP). It is essential for the degradation of carbohydrates via glycolysis. The sequence is that of Enolase from Acidiphilium cryptum (strain JF-5).